A 529-amino-acid chain; its full sequence is Fibroblast growth factor receptor-like 1 (529 aa).

The first 20 residues, 1–20 (MTRSPALLLLLLGALPSAEA), serve as a signal peptide directing secretion. The Extracellular portion of the chain corresponds to 21 to 374 (ARGPPRMADK…SSSSTSLPWP (354 aa)). Ig-like C2-type domains follow at residues 25 to 111 (PRMA…YTLI), 143 to 233 (PRFT…YKVD), and 242 to 350 (PVLT…AFLT). Cysteine 47 and cysteine 95 form a disulfide bridge. N-linked (GlcNAc...) asparagine glycosylation occurs at asparagine 107. The segment at 116–151 (ISPGKESPGPGGSSGGQEDPASQQWARPRFTQPSKM) is disordered. A disulfide bridge connects residues cysteine 168 and cysteine 217. N-linked (GlcNAc...) asparagine glycans are attached at residues asparagine 227, asparagine 251, and asparagine 289. An intrachain disulfide couples cysteine 264 to cysteine 334. A helical transmembrane segment spans residues 375–395 (VVIGIPAGAVFILGTVLLWLC). The Cytoplasmic portion of the chain corresponds to 396 to 529 (QTKKKPCAPA…RIENNGGRVS (134 aa)). The disordered stretch occupies residues 405 to 427 (ASTLPVPGHRPPGTSRERSGDKD).

Interacts with FGF2 with a low affinity. Highly expressed in the kidney, brain and lung. Weakly expressed in the muscle, thymus, lymph node, stomach, intestine, colon and liver. Expressed in fetal cartilaginous structures like the nasal cartilage, the ribs and the sternum as well as in the cartilaginous rudiments of developing bones such as the vertebrae and the pelvic bone. High expression is found in the muscles of the tongue and the diaphragm.

Its subcellular location is the cell membrane. In terms of biological role, has a negative effect on cell proliferation. The protein is Fibroblast growth factor receptor-like 1 (Fgfrl1) of Mus musculus (Mouse).